The primary structure comprises 262 residues: Large ribosomal subunit protein uL10m (262 aa).

The transit peptide at 1–28 directs the protein to the mitochondrion; it reads MAAAVAGILRGGLPPRAAWLPTLQTVRH. The disordered stretch occupies residues 243-262; that stretch reads GDCATSANEKLHPPDPAPDA.

This sequence belongs to the universal ribosomal protein uL10 family. As to quaternary structure, component of the mitochondrial ribosome large subunit (39S) which comprises a 16S rRNA and about 50 distinct proteins.

The protein resides in the mitochondrion. The protein is Large ribosomal subunit protein uL10m (Mrpl10) of Mus musculus (Mouse).